The chain runs to 149 residues: D-aminoacyl-tRNA deacylase (149 aa).

The Gly-cisPro motif, important for rejection of L-amino acids signature appears at 137 to 138 (GP).

This sequence belongs to the DTD family. In terms of assembly, homodimer.

The protein resides in the cytoplasm. It carries out the reaction glycyl-tRNA(Ala) + H2O = tRNA(Ala) + glycine + H(+). The catalysed reaction is a D-aminoacyl-tRNA + H2O = a tRNA + a D-alpha-amino acid + H(+). In terms of biological role, an aminoacyl-tRNA editing enzyme that deacylates mischarged D-aminoacyl-tRNAs. Also deacylates mischarged glycyl-tRNA(Ala), protecting cells against glycine mischarging by AlaRS. Acts via tRNA-based rather than protein-based catalysis; rejects L-amino acids rather than detecting D-amino acids in the active site. By recycling D-aminoacyl-tRNA to D-amino acids and free tRNA molecules, this enzyme counteracts the toxicity associated with the formation of D-aminoacyl-tRNA entities in vivo and helps enforce protein L-homochirality. The chain is D-aminoacyl-tRNA deacylase from Clostridium tetani (strain Massachusetts / E88).